The following is a 2464-amino-acid chain: MSAHTRTDCDHPELPKLATVISGYRHCDLPDLSSDRFPASTTYSVSACIKESLISTQVDVLDARAPFAVLVATIGRVLGAYCGCTDVILALTDQDCEDLRTARITWDENTQWADLLHTVLQSLSGDTSFRITVPAIREALGLTEKQAPCLALVRDAPSSDYDNTDFPLVFNWDISTFTLRLFTSERHLHPSGADLLASQIASLLVPALTNPATQVFRLPDLQADLLSIYEKLTFEDRCQAYSRVPPVRLATDHLTLRLASQANDVAVEWYGALADDHHPGTSQPETMTFGEWHRRANQMARWLVARGLEKGDKVAVCMKRDTSYHVSLIAVLKAGACYVPIDPELPSERQSYIACDSGARFVLVSSETASTSIFGDIALEISSNEARRGIEAESDEELDLATPDDVSYLLYTSGTTGTPKGCVLTHRGLSEAVWALSAVCAEVDMEEGHMGNYLSIASVAFDVHLAEIFIPLARGMSIVSAPRSTLLEDLPYFIKELKISHLGIVPSLIEATMGSIQEDVESGGSTTLRYIASGGEKMSDAILDKWANHPTVRLANFYGPSEVTIGCAARFMDKTTPRANIGHPFASVSAFVVDENMNILLRGAPGELVVEGPLVGVGYHGRPDLTEKVFLEFPERGAGRWAYRTGDLVRMMPDGTLEVIGRIDTQIKLRGVRIESEGISSIVRSAGLPEHTLDVVTILGKHPAIGVEQLVSFIVWDQSTSVAVRKSTKPTVIAPSGNLLTKLSAACERELASYMRPSHFIPLNFMPLSSNGKNDAKLLTRVFQELDMDVLGSLMSRGSSTSVGSPNSGRTQLTKAEGQLLEIAKKHVHVPSGAANPNTNLFRYGLDSMSAVRLAAELRRTFSKVITASDILKSPSLEQIAKALDASSSSDQEQSPVESFVQRFSAERMQDVTEAYDSHVISAIYPPFPLQEGILYRSVNADTLYVQHVLLELAPGVSVDKLRQAWIDVVISSPILRTVFHFGRDLVQVVLHSDDVSRDIGEDVVHCDDAEAFKALFAERQSSVASKINQNVADTSPHRFTIYRSKDNGLVFVGLSIHHALFDGISLSHILRNLEKVYLDEPGYPSAAPEAVLDTIASVNVQTAQDFWVQHFAGFDWNRMPSRTASAKRADEKSLTFQIGLSELQRKASERRITLQSLLMTAFAHFLAKYMYGHNDVAFGIIRSGRSLPIADIETTVLPLLSVLPARVVLSASDVLRNVQTFNAEVTAYEHIPLGKIQQWVRPGANLFETLFSLSYKDDGRSSVWRLLESHNPEPDYILAVEVVLDTTEDRLTVQVAYTSQDLSSDIVDHLLDNFEGLALDLAQGSALNVETDSAAESGTALTSSEQTTQVTDIDAGEIDAVDEDLLLRLRKIVANFLQISVDLVTEGVSLVALGLDSIRSVGLSRVLRKEGIELASAEIMKLATPRRMAASAGKKISIPSTTKHKIDAYASSFARERDRIRAALDAASVSLSPDDEVDVFPVTTLQAGMLSQTVSSAGRRYVHLFPLRLTNGVDVAKLRDAWAKTVDALGILRTTFHFVPDLGIWTSAVHSKSPLKWSEIYLLEDASLLPLLDAVTITDAGCNSPPYQLYLVRSQEVDSQEDCRLIMVLHHALYDGVSISKLLDIVGASYNGEVTQNIVQFTSLLPEILWQEHLGTSFWVERLKNFHHGLVVPRLPDGSHSKKSHVASSVLNVSRSEVEKVCRLTAVTTQCVGQYAFAKLLASLTRSTDILFGHVVSGRNVSGAEDVIGPVLNTVPCRVRFASSVSNKLLLQAIHDTNVTALSWQHASLRSIQSHLKVERLWDCLFVFQPSQATETSEHKSVWEFDEVEDEDIDIQYGFNLELHETAAGFLLKAACSDRLMDAEDLGAALERFGLFLRVLVDDLDASCLNGLPDLTAPTTPHSVSESDFETDQIVSSWDEKSSTLRELLSTATGIPSSKIQMSMRLLGLGIDSISAIQIASKARRTGLHLTARDIIQSRTVGDLVMRAGAEDESEDRAGQALQTAFQIPRQEWSALTPKVKESDVDSVTVATPGMQWFMGGWQRSGGSRYQHVFGFELSADVDILKLQKAWDELLTRHAILRAAFSSSAQGEPRVVIYKRESMGARWQEEECDDIQDYDEGVASRMRALISSPPSSMQEPLTRATLLRSPSRNALIIHLHHFQYDAWSLQLLLDDLVRLYQGQPPTSSNDHSAILRVAVPDEHTRTEQRSYWQRMLTPNDPTLILFPKIPGHQARSNSSHNFLMKKSVLTPIADLEARARALSVSLYVVYLTCWAQVQAAATSSNSAIFGLWHSGRTGSIDQVECLAAPCLNILPFVVRGFNSTSTMDIATQIQDDLRERTPLVEQSPLTLVDEVMGGTGRPLCNVFVNIVRAAPELHSTQQTIFTPIDVPYFIPEAPSRGKTAMPELKVTGLIQDDIIVDIVDVSERGEVAMSIEFSEDTLDVETAEAMILQWVQLVKECLA.

Residues 275-670 (DDHHPGTSQP…GRIDTQIKLR (396 aa)) are adenylation 1. The Carrier 1 domain maps to 814–888 (TKAEGQLLEI…QIAKALDASS (75 aa)). The residue at position 848 (Ser848) is an O-(pantetheine 4'-phosphoryl)serine. A condensation 1 region spans residues 924–1325 (IYPPFPLQEG…EGLALDLAQG (402 aa)). Positions 1364 to 1437 (EDLLLRLRKI…RMAASAGKKI (74 aa)) constitute a Carrier 2 domain. Ser1398 is subject to O-(pantetheine 4'-phosphoryl)serine. A condensation 2 region spans residues 1479-1887 (DVFPVTTLQA…LRVLVDDLDA (409 aa)). A Carrier 3 domain is found at 1917-1993 (SSWDEKSSTL…DLVMRAGAED (77 aa)). The residue at position 1954 (Ser1954) is an O-(pantetheine 4'-phosphoryl)serine. Positions 2047–2340 (GGSRYQHVFG…ATQIQDDLRE (294 aa)) are condensation 3.

It belongs to the NRP synthetase family.

It participates in siderophore biosynthesis. In terms of biological role, nonribosomal peptide synthetase; part of the siderophore basidioferrin biosynthetic pathway. The biosynthesis of basidioferrin depends on the hydroxylation of ornithine to N(5)-hydroxyornithine, catalyzed by the monooxygenase SMO1. The second step, the acylation of N(5)-hydroxy-L-ornithine is catalyzed by a not yet identified N-acyltransferase. Finally, assembly of basidioferrin is catalyzed by the nonribosomal peptide synthase (NRPS) NPS2 via amide bond formation between three L-AHO molecules to release the linear L-AHO trimer. N-5-acetyl-N-5-hydroxy-L-ornithine (L-AHO) and N-5-cis-anhydromevalonyl-N-5-hydroxy-L-ornithine (L-AMHO) are accepted as the substrates by the NPS2 adenylation (A) domain, but only L-AHO is trimerized. The polypeptide is Nonribosomal peptide synthetase NPS2 (Ceriporiopsis subvermispora (strain B) (White-rot fungus)).